We begin with the raw amino-acid sequence, 478 residues long: Dihydrolipoyl dehydrogenase (478 aa).

Residues 36-45, K54, and A117 each bind FAD; that span reads ERYSTLGGVC. C45 and C50 are oxidised to a cystine. NAD(+)-binding positions include 183–187, E206, V239, and 270–273; these read GGGII and AIGR. Residues D313 and A321 each contribute to the FAD site. The active-site Proton acceptor is the H445.

The protein belongs to the class-I pyridine nucleotide-disulfide oxidoreductase family. Homodimer. The cofactor is FAD.

Its subcellular location is the cytoplasm. It carries out the reaction N(6)-[(R)-dihydrolipoyl]-L-lysyl-[protein] + NAD(+) = N(6)-[(R)-lipoyl]-L-lysyl-[protein] + NADH + H(+). Its function is as follows. Lipoamide dehydrogenase is a component of the alpha-ketoacid dehydrogenase complexes. The protein is Dihydrolipoyl dehydrogenase (lpdA) of Haemophilus influenzae (strain ATCC 51907 / DSM 11121 / KW20 / Rd).